Here is a 1396-residue protein sequence, read N- to C-terminus: MNQEVLNIFNPVQAAPTFDQIRISLASPEKIRSWSFGEIKKPETINYRTFKPERDGLFCARIFGPTKDYECLCGKYKRMKYKGIICEKCGVEVTLARVRRERMGHIELASPVAHIWFLKSLPSRIAMMLDMPLKDIERVLYFEYYIVTEPGLTPLKQHQLLSEDDYMRAQEEYGDDSFTAEIGAEAIQNLLKAIDLEKEAERLREELSGTVSDMKQKKFSKRLKILEAFQESGNRPEWMVLTVVPVIPPELRPLVPLDGGRFATSDLNDLYRRVINRNNRLKRLIELRAPDIIIRNEKRMLQESVDALFDNGRRGRVITGANKRPLKSLADMLKGKQGRFRQNLLGKRVDYSGRSVIVVGPELKLHECGLPKKMALELFKPFIYARLDAKGLSGTVKQSKRMVEREQPQVWDILEEVIREHPVLLNRAPTLHRLGIQAFEPKLIEGKAIQLHPLVCAAFNADFDGDQMAVHVPLSLEAQLEARVLMMSTNNILSPANGRPIIVPSQDIVLGLYYLSVARDGEPGEGKIFADLGEIEAAMDAGVVSLHAKIKARHTEMTPEGVLLRKVIDTTPGRMKIAALLPHHPQIGHRLIEKALTKKEIGNLIDIVYRHCGQKATVIFADKVMGLGFKEAAKAGISFGKDDIIIPVRKTAIVEETRKLAEEYEQQYADGLITKGEKYNKVVDAWAKATDRVADEMMAELQMKHKDENGREKEINAIYMMAHSGARGSQAQMKQLGGMRGLMAKPSGEIIETPIVSNFKEGLTVQEYFNSTHGARKGLADTALKTANSGYLTRRLVDVAQDCIIVEEDCGTTKGITLRAVVEGGDVLVSLGSRVLGRFTAEDVKDPGTGELVVPADTYIDENIADAIEAAVVQSVKVRSVLTCEAKIGVCGACYGRDLARGTPVNIGEAVGVIAAQSIGEPGTQLTMRTFHIGGTAQVAEQSFFEASNEGTVRVIGPTVVGSDGALVIMSRNTSVSVLVDGKERETYKPPYGARLRVKDGDLVKRGQRLGDWDPYTTPIITEVAGKIRAEDLVDGLSIREEVDEATGIAQRVVADWRTSARGSDLRPAMGVLSEDGSYKRLSNGGEARYLLSAGAILSVADGDEVKPGEVIARIPTEGAKTRDITGGLPRVAELFEARRPKDCAVIAEMDGRVEFGKDYKNKRRIKITPDVDADGNQPEAVEFLIPKGKHIAVHDGDYITKGEYIIDGNPDPHDILRILGVEALANFLVDEIQEVYRLQGVPINDKHIETIVRQMLQKVEILEPGDTGLIKGDHLDKPEFDKEQEKAIARGGRPAVTQPVLLGITKASLQTKSFISAASFQETTRVLTEASVHGKTDTLEGLKENVIVGRLIPAGTGSYLRSLQRVAAKRDEQLAQQREDAMEPLPAEIALSDAE.

Residues C71, C73, C86, and C89 each coordinate Zn(2+). 3 residues coordinate Mg(2+): D462, D464, and D466. The Zn(2+) site is built by C810, C884, C891, and C894. The segment covering 1372–1382 has biased composition (basic and acidic residues); it reads DEQLAQQREDA. A disordered region spans residues 1372–1396; the sequence is DEQLAQQREDAMEPLPAEIALSDAE.

Belongs to the RNA polymerase beta' chain family. The RNAP catalytic core consists of 2 alpha, 1 beta, 1 beta' and 1 omega subunit. When a sigma factor is associated with the core the holoenzyme is formed, which can initiate transcription. The cofactor is Mg(2+). Zn(2+) serves as cofactor.

It carries out the reaction RNA(n) + a ribonucleoside 5'-triphosphate = RNA(n+1) + diphosphate. DNA-dependent RNA polymerase catalyzes the transcription of DNA into RNA using the four ribonucleoside triphosphates as substrates. In Caulobacter vibrioides (strain ATCC 19089 / CIP 103742 / CB 15) (Caulobacter crescentus), this protein is DNA-directed RNA polymerase subunit beta'.